The following is a 76-amino-acid chain: Paralithocin 3 (76 aa).

The signal sequence occupies residues 1-23 (MGPMKVLLVMLVVMVAAPHIADA). 4 disulfides stabilise this stretch: C31-C62, C40-C58, C44-C56, and C49-C59. Position 74 is a proline amide; partial (P74).

This sequence belongs to the paralithocin family. In terms of processing, the amidated form is probably the active form.

Its function is as follows. Has antibacterial activity, mainly against marine Gram-positive bacteria like C.maltaromaticum (MIC=25 uM), C.mobile (MIC=12.5 uM), C.divergens (MIC=25 uM) and C.funditum (MIC=12.5 uM) but also against C.glutamicum (MIC=12.5 uM). Has very little or no activity against Gram-negative bacteria. In Paralithodes camtschaticus (Red king crab), this protein is Paralithocin 3.